We begin with the raw amino-acid sequence, 484 residues long: Aspartyl/glutamyl-tRNA(Asn/Gln) amidotransferase subunit B (484 aa).

Belongs to the GatB/GatE family. GatB subfamily. Heterotrimer of A, B and C subunits.

The enzyme catalyses L-glutamyl-tRNA(Gln) + L-glutamine + ATP + H2O = L-glutaminyl-tRNA(Gln) + L-glutamate + ADP + phosphate + H(+). The catalysed reaction is L-aspartyl-tRNA(Asn) + L-glutamine + ATP + H2O = L-asparaginyl-tRNA(Asn) + L-glutamate + ADP + phosphate + 2 H(+). Its function is as follows. Allows the formation of correctly charged Asn-tRNA(Asn) or Gln-tRNA(Gln) through the transamidation of misacylated Asp-tRNA(Asn) or Glu-tRNA(Gln) in organisms which lack either or both of asparaginyl-tRNA or glutaminyl-tRNA synthetases. The reaction takes place in the presence of glutamine and ATP through an activated phospho-Asp-tRNA(Asn) or phospho-Glu-tRNA(Gln). The chain is Aspartyl/glutamyl-tRNA(Asn/Gln) amidotransferase subunit B from Cupriavidus metallidurans (strain ATCC 43123 / DSM 2839 / NBRC 102507 / CH34) (Ralstonia metallidurans).